A 1091-amino-acid polypeptide reads, in one-letter code: Isoleucine--tRNA ligase (1091 aa).

The 'HIGH' region motif lies at 48–58; that stretch reads PFATGLPHFGH. The short motif at 625-629 is the 'KMSKS' region element; that stretch reads KMSKA. Position 628 (Lys-628) interacts with ATP.

Belongs to the class-I aminoacyl-tRNA synthetase family. IleS type 2 subfamily. As to quaternary structure, monomer. Requires Zn(2+) as cofactor.

The protein localises to the cytoplasm. It catalyses the reaction tRNA(Ile) + L-isoleucine + ATP = L-isoleucyl-tRNA(Ile) + AMP + diphosphate. Catalyzes the attachment of isoleucine to tRNA(Ile). As IleRS can inadvertently accommodate and process structurally similar amino acids such as valine, to avoid such errors it has two additional distinct tRNA(Ile)-dependent editing activities. One activity is designated as 'pretransfer' editing and involves the hydrolysis of activated Val-AMP. The other activity is designated 'posttransfer' editing and involves deacylation of mischarged Val-tRNA(Ile). This is Isoleucine--tRNA ligase from Treponema pallidum (strain Nichols).